A 383-amino-acid chain; its full sequence is S-adenosylmethionine:tRNA ribosyltransferase-isomerase (383 aa).

The protein belongs to the QueA family. As to quaternary structure, monomer.

Its subcellular location is the cytoplasm. It carries out the reaction 7-aminomethyl-7-carbaguanosine(34) in tRNA + S-adenosyl-L-methionine = epoxyqueuosine(34) in tRNA + adenine + L-methionine + 2 H(+). Its pathway is tRNA modification; tRNA-queuosine biosynthesis. Functionally, transfers and isomerizes the ribose moiety from AdoMet to the 7-aminomethyl group of 7-deazaguanine (preQ1-tRNA) to give epoxyqueuosine (oQ-tRNA). The sequence is that of S-adenosylmethionine:tRNA ribosyltransferase-isomerase from Rickettsia prowazekii (strain Madrid E).